Here is a 264-residue protein sequence, read N- to C-terminus: Thymidylate synthase (264 aa).

Arg21 is a binding site for dUMP. His51 lines the (6R)-5,10-methylene-5,6,7,8-tetrahydrofolate pocket. 126–127 contacts dUMP; it reads RR. Residue Cys146 is the Nucleophile of the active site. Residues 166-169, Asn177, and 207-209 each bind dUMP; these read RSCD and HLY. Residue Asp169 coordinates (6R)-5,10-methylene-5,6,7,8-tetrahydrofolate. Ser263 contacts (6R)-5,10-methylene-5,6,7,8-tetrahydrofolate.

Belongs to the thymidylate synthase family. Bacterial-type ThyA subfamily. As to quaternary structure, homodimer.

It is found in the cytoplasm. The catalysed reaction is dUMP + (6R)-5,10-methylene-5,6,7,8-tetrahydrofolate = 7,8-dihydrofolate + dTMP. The protein operates within pyrimidine metabolism; dTTP biosynthesis. Its function is as follows. Catalyzes the reductive methylation of 2'-deoxyuridine-5'-monophosphate (dUMP) to 2'-deoxythymidine-5'-monophosphate (dTMP) while utilizing 5,10-methylenetetrahydrofolate (mTHF) as the methyl donor and reductant in the reaction, yielding dihydrofolate (DHF) as a by-product. This enzymatic reaction provides an intracellular de novo source of dTMP, an essential precursor for DNA biosynthesis. This Wigglesworthia glossinidia brevipalpis protein is Thymidylate synthase.